We begin with the raw amino-acid sequence, 447 residues long: UDP-glucosyl transferase 79T1 (447 aa).

The active-site Proton acceptor is the H18. The active-site Charge relay is the D116. Residues S265, W323, V324, H341, T346, and E349 each contribute to the UDP site.

The protein belongs to the UDP-glycosyltransferase family. In terms of tissue distribution, mainly expressed in flowers, flower buds and young leaves, and, to a lesser extent, in old leaves, stems and roots.

Its pathway is secondary metabolite biosynthesis; terpenoid biosynthesis. Component of the oleanane-type triterpene saponins (e.g. saponarioside A and saponarioside B) biosynthetic pathway, leading to the production of natural products with detergent properties used as traditional sources of soap. A glycosyltransferase that mediates the conversion of QA-triF to QA-triFR via the elongation of the C-28 sugar chain with a deoxyhexose on the D-fucose moiety. This Saponaria officinalis (Common soapwort) protein is UDP-glucosyl transferase 79T1.